Reading from the N-terminus, the 354-residue chain is 3-isopropylmalate dehydrogenase (354 aa).

74 to 87 (GPKWDDLPPEKRPE) contributes to the NAD(+) binding site. Positions 95, 105, 134, and 219 each coordinate substrate. Residues Asp-219, Asp-243, and Asp-247 each coordinate Mg(2+). Residue 275-287 (GSAPDIAGKNIAN) coordinates NAD(+).

It belongs to the isocitrate and isopropylmalate dehydrogenases family. LeuB type 1 subfamily. As to quaternary structure, homodimer. Mg(2+) is required as a cofactor. Mn(2+) serves as cofactor.

It is found in the cytoplasm. It carries out the reaction (2R,3S)-3-isopropylmalate + NAD(+) = 4-methyl-2-oxopentanoate + CO2 + NADH. It functions in the pathway amino-acid biosynthesis; L-leucine biosynthesis; L-leucine from 3-methyl-2-oxobutanoate: step 3/4. Functionally, catalyzes the oxidation of 3-carboxy-2-hydroxy-4-methylpentanoate (3-isopropylmalate) to 3-carboxy-4-methyl-2-oxopentanoate. The product decarboxylates to 4-methyl-2 oxopentanoate. The chain is 3-isopropylmalate dehydrogenase (leuB) from Thermotoga maritima (strain ATCC 43589 / DSM 3109 / JCM 10099 / NBRC 100826 / MSB8).